Here is a 119-residue protein sequence, read N- to C-terminus: Large ribosomal subunit protein bL20 (119 aa).

It belongs to the bacterial ribosomal protein bL20 family.

Its function is as follows. Binds directly to 23S ribosomal RNA and is necessary for the in vitro assembly process of the 50S ribosomal subunit. It is not involved in the protein synthesizing functions of that subunit. The chain is Large ribosomal subunit protein bL20 from Chloroflexus aggregans (strain MD-66 / DSM 9485).